The chain runs to 526 residues: Ribonuclease Y (526 aa).

A helical transmembrane segment spans residues 10–30 (ITFILLIVVGALGGALVGYFI). One can recognise a KH domain in the interval 216-279 (TVTVVEIPNE…EVAKRALTIL (64 aa)). In terms of domain architecture, HD spans 342–435 (VLKHSIEVAF…VAAADALSAA (94 aa)).

Belongs to the RNase Y family.

It is found in the cell membrane. Endoribonuclease that initiates mRNA decay. This chain is Ribonuclease Y, found in Acholeplasma laidlawii (strain PG-8A).